We begin with the raw amino-acid sequence, 327 residues long: Dolichyl-phosphate beta-glucosyltransferase ALG5D (327 aa).

Residues 1–6 (MEKQLA) are Lumenal-facing. The chain crosses the membrane as a helical span at residues 7–27 (ELSVYILIIFLILGFIMAILM). The Cytoplasmic segment spans residues 28–327 (RFGDDTTLFD…NIWTIRDRKF (300 aa)).

This sequence belongs to the glycosyltransferase 2 family.

The protein localises to the endoplasmic reticulum membrane. It carries out the reaction a di-trans,poly-cis-dolichyl phosphate + UDP-alpha-D-glucose = a di-trans,poly-cis-dolichyl beta-D-glucosyl phosphate + UDP. Its pathway is protein modification; protein glycosylation. Its function is as follows. Dolichyl-phosphate beta-glucosyltransferase involved in the glycosylation of glycoproteins through the synthesis of dolichyl beta-D-glucosyl phosphate which serves as a sugar donor for transfer of three glucose residues to the Man-9-GlcNAc-2-PP-dolichol precursor to N-glycans. The sequence is that of Dolichyl-phosphate beta-glucosyltransferase ALG5D from Trichomonas vaginalis (strain ATCC PRA-98 / G3).